The following is a 111-amino-acid chain: WAP four-disulfide core domain protein 12 (111 aa).

The signal sequence occupies residues 1–23 (MGSSSFLVLMVSLTLVTLVAVEG). Residues 27-74 (DIEKAGVCPADNVRCFKSDPPQCHTDQDCLGERKCCYLHCGFKCVIPV) form the WAP domain. Intrachain disulfides connect Cys-34-Cys-62, Cys-41-Cys-66, Cys-49-Cys-61, and Cys-55-Cys-70. The segment at 80-111 (GGNKDEDVSRPYPEPGWEAKCPGSSSTRCPQK) is disordered. Polar residues predominate over residues 102 to 111 (GSSSTRCPQK).

It localises to the secreted. Antibacterial protein. Putative acid-stable proteinase inhibitor. The polypeptide is WAP four-disulfide core domain protein 12 (WFDC12) (Pan troglodytes (Chimpanzee)).